The primary structure comprises 566 residues: Sulfite reductase [NADPH] hemoprotein beta-component (566 aa).

Cys430, Cys436, Cys475, and Cys479 together coordinate [4Fe-4S] cluster. A siroheme-binding site is contributed by Cys479.

The protein belongs to the nitrite and sulfite reductase 4Fe-4S domain family. As to quaternary structure, alpha(8)-beta(8). The alpha component is a flavoprotein, the beta component is a hemoprotein. The cofactor is siroheme. [4Fe-4S] cluster serves as cofactor.

The enzyme catalyses hydrogen sulfide + 3 NADP(+) + 3 H2O = sulfite + 3 NADPH + 4 H(+). It participates in sulfur metabolism; hydrogen sulfide biosynthesis; hydrogen sulfide from sulfite (NADPH route): step 1/1. In terms of biological role, component of the sulfite reductase complex that catalyzes the 6-electron reduction of sulfite to sulfide. This is one of several activities required for the biosynthesis of L-cysteine from sulfate. This chain is Sulfite reductase [NADPH] hemoprotein beta-component, found in Baumannia cicadellinicola subsp. Homalodisca coagulata.